We begin with the raw amino-acid sequence, 472 residues long: Poly(A) polymerase catalytic subunit (472 aa).

Catalysis depends on residues Asp194 and Asp196.

It belongs to the poxviridae poly(A) polymerase catalytic subunit family. Heterodimer of a large (catalytic) subunit and a small (regulatory) subunit.

The enzyme catalyses RNA(n) + ATP = RNA(n)-3'-adenine ribonucleotide + diphosphate. Functionally, polymerase that creates the 3'-poly(A) tail of mRNA's. The protein is Poly(A) polymerase catalytic subunit (PAPL) of Fowlpox virus (strain NVSL) (FPV).